Here is a 537-residue protein sequence, read N- to C-terminus: Phosphoenolpyruvate carboxykinase (ATP) (537 aa).

Residues arginine 61, tyrosine 195, and lysine 201 each contribute to the substrate site. Residues lysine 201, histidine 220, and 236–244 contribute to the ATP site; that span reads GLSGTGKTT. Residues lysine 201 and histidine 220 each coordinate Mn(2+). Aspartate 257 contacts Mn(2+). Positions 285, 323, and 448 each coordinate ATP. Arginine 323 lines the substrate pocket.

The protein belongs to the phosphoenolpyruvate carboxykinase (ATP) family. The cofactor is Mn(2+).

It localises to the cytoplasm. The catalysed reaction is oxaloacetate + ATP = phosphoenolpyruvate + ADP + CO2. The protein operates within carbohydrate biosynthesis; gluconeogenesis. Functionally, involved in the gluconeogenesis. Catalyzes the conversion of oxaloacetate (OAA) to phosphoenolpyruvate (PEP) through direct phosphoryl transfer between the nucleoside triphosphate and OAA. In Rhodopseudomonas palustris (strain BisA53), this protein is Phosphoenolpyruvate carboxykinase (ATP).